A 403-amino-acid polypeptide reads, in one-letter code: Large ribosomal subunit protein uL3 (403 aa).

A disordered region spans residues 1–37 (MSHRKFSAPRHGSLGFLPRKRSSRHRGKVKSFPKDDP). Serine 13 bears the Phosphoserine mark. Basic residues predominate over residues 18–31 (PRKRSSRHRGKVKS). A Glycyl lysine isopeptide (Lys-Gly) (interchain with G-Cter in SUMO2) cross-link involves residue lysine 39. Lysine 136 carries the N6-acetyllysine modification. Residues lysine 224 and lysine 226 each participate in a glycyl lysine isopeptide (Lys-Gly) (interchain with G-Cter in SUMO2) cross-link. Histidine 245 is modified (tele-methylhistidine). Residues lysine 286 and lysine 294 each carry the N6-acetyllysine; alternate modification. Lysine 286 is covalently cross-linked (Glycyl lysine isopeptide (Lys-Gly) (interchain with G-Cter in SUMO2); alternate). Lysine 294 participates in a covalent cross-link: Glycyl lysine isopeptide (Lys-Gly) (interchain with G-Cter in SUMO1); alternate. Serine 304 bears the Phosphoserine mark. An N6-acetyllysine; alternate modification is found at lysine 366. Lysine 366 participates in a covalent cross-link: Glycyl lysine isopeptide (Lys-Gly) (interchain with G-Cter in SUMO2); alternate. An N6-acetyllysine modification is found at lysine 373. Glycyl lysine isopeptide (Lys-Gly) (interchain with G-Cter in SUMO2) cross-links involve residues lysine 386, lysine 393, and lysine 399.

This sequence belongs to the universal ribosomal protein uL3 family. Component of the large ribosomal subunit. Interacts with DHX33. In terms of processing, constitutively monomethylated at His-245 by METTL18. Methylation at His-245 regulates translation elongation by slowing ribosome traversal on tyrosine codons: slower elongation provides enough time for proper folding of synthesized proteins and prevents cellular aggregation of tyrosine-rich proteins. It is not required for incorporation of RPL3 into ribosomes.

Its subcellular location is the nucleus. The protein localises to the nucleolus. It is found in the cytoplasm. Functionally, component of the large ribosomal subunit. The ribosome is a large ribonucleoprotein complex responsible for the synthesis of proteins in the cell. The sequence is that of Large ribosomal subunit protein uL3 (Rpl3) from Rattus norvegicus (Rat).